The primary structure comprises 361 residues: Peptide chain release factor 1 (361 aa).

N5-methylglutamine is present on glutamine 235.

Belongs to the prokaryotic/mitochondrial release factor family. In terms of processing, methylated by PrmC. Methylation increases the termination efficiency of RF1.

It is found in the cytoplasm. Peptide chain release factor 1 directs the termination of translation in response to the peptide chain termination codons UAG and UAA. The protein is Peptide chain release factor 1 of Buchnera aphidicola subsp. Schizaphis graminum (strain Sg).